The sequence spans 436 residues: 2-aminohexano-6-lactam racemase (436 aa).

Pyridoxal 5'-phosphate contacts are provided by residues 110-111, tyrosine 137, and 238-241; these read GS and DEVK. The active site involves tyrosine 137. Lysine 267 is modified (N6-(pyridoxal phosphate)lysine). Position 295 (threonine 295) interacts with pyridoxal 5'-phosphate.

The protein belongs to the class-III pyridoxal-phosphate-dependent aminotransferase family. In terms of assembly, monomer. Pyridoxal 5'-phosphate is required as a cofactor.

It catalyses the reaction L-2-aminohexano-6-lactam = D-2-aminohexano-6-lactam. Functionally, catalyzes the interconversion of L-alpha-amino-epsilon-caprolactam and D-alpha-amino-epsilon-caprolactam. This chain is 2-aminohexano-6-lactam racemase, found in Achromobacter obae.